A 375-amino-acid polypeptide reads, in one-letter code: Porin Omp2b (375 aa).

The first 22 residues, Met1 to Ala22, serve as a signal peptide directing secretion.

The protein belongs to the alphaproteobacteria porin family. Homotrimer.

The protein localises to the cell outer membrane. Its function is as follows. Forms passive diffusion pores that allow small molecular weight hydrophilic materials across the outer membrane. This Brucella suis protein is Porin Omp2b (omp2b).